The sequence spans 528 residues: uncharacterized protein (528 aa).

FAD is bound at residue 6-35; it reads DYVVVGTGSAGAVVASRLSTDPATTVVALE. The active-site Proton acceptor is the His-468.

Belongs to the GMC oxidoreductase family. FAD is required as a cofactor.

This is an uncharacterized protein from Mycobacterium bovis (strain ATCC BAA-935 / AF2122/97).